We begin with the raw amino-acid sequence, 519 residues long: Sensory neuron membrane protein 2 (519 aa).

Topologically, residues 1 to 7 (MLAKHSK) are cytoplasmic. Residues 8–28 (LFFTGSVVFLIVAIVLASWGF) traverse the membrane as a helical segment. Over 29 to 469 (PKIISTRIQK…DAHALLSYAQ (441 aa)) the chain is Extracellular. Residues asparagine 44, asparagine 67, asparagine 104, asparagine 166, asparagine 229, asparagine 272, and asparagine 314 are each glycosylated (N-linked (GlcNAc...) asparagine). 3 cysteine pairs are disulfide-bonded: cysteine 268–cysteine 338, cysteine 299–cysteine 362, and cysteine 340–cysteine 351. A helical transmembrane segment spans residues 470 to 490 (LARWIILAAAIILAIIATITV). Residues 491-519 (ARSTSLISWPRNSNSVNFIIGPMVNDKMR) are Cytoplasmic-facing.

The protein belongs to the CD36 family. As to expression, localizes to both male and female antennae but not the leg, wing, gut, head or thoracic ganglia. Detected throughout the sensory epithelium, associating with both sex-pheromone sensilla and plant-volatile sensilla. Differentially expressed among different sensilla and different neurons within a given sensillum.

The protein resides in the cell membrane. Its function is as follows. Plays an olfactory role that is not restricted to pheromone sensitivity. The protein is Sensory neuron membrane protein 2 of Manduca sexta (Tobacco hawkmoth).